The chain runs to 488 residues: (Z)-2-((N-methylformamido)methylene)-5-hydroxybutyrolactone dehydrogenase (488 aa).

NAD(+)-binding positions include 149–150 (WN) and 226–227 (GG). The active-site Proton acceptor is Glu248. Leu249 is a binding site for NAD(+). Catalysis depends on Cys282, which acts as the Nucleophile. Residue Glu380 participates in NAD(+) binding.

The protein belongs to the aldehyde dehydrogenase family. Homodimer.

The enzyme catalyses (Z)-2-((N-methylformamido)methylene)-5-hydroxybutanolactone + NAD(+) + H2O = (E)-2-((N-methylformamido) methylene)succinate + NADH + 3 H(+). Functionally, involved in the degradation of the pyridine ring of trigonelline (TG; N-methylnicotinate) into succinate and methylamine as carbon and nitrogen sources, respectively. Catalyzes the NAD(+)-dependent oxidation of (Z)-2-((N-methylformamido)methylene)-5-hydroxybutyrolactone (MFMB) to yield (E)-2-((N-methylformamido)methylene)succinate (MFMS). The protein is (Z)-2-((N-methylformamido)methylene)-5-hydroxybutyrolactone dehydrogenase of Acinetobacter baylyi (strain ATCC 33305 / BD413 / ADP1).